The sequence spans 765 residues: Amine oxidase [copper-containing] 3 (765 aa).

The Cytoplasmic portion of the chain corresponds to 1-6 (MTQKTT). The helical; Signal-anchor for type II membrane protein transmembrane segment at 7–27 (LVLLALAVITIFALVCVLLAG) threads the bilayer. Residues 28-765 (RSGDGGGLSQ…SHGGFAYRDN (738 aa)) are Extracellular-facing. Asparagine 137 carries N-linked (GlcNAc...) asparagine glycosylation. A disulfide bond links cysteine 198 and cysteine 199. N-linked (GlcNAc...) asparagine glycosylation is found at asparagine 232 and asparagine 294. Aspartate 386 acts as the Proton acceptor in catalysis. A disulfide bridge links cysteine 404 with cysteine 430. Tyrosine 471 serves as the catalytic Schiff-base intermediate with substrate; via topaquinone. Tyrosine 471 is modified (2',4',5'-topaquinone). Cu(2+)-binding residues include histidine 520 and histidine 522. 4 residues coordinate Ca(2+): aspartate 529, leucine 530, aspartate 531, and glutamate 572. A glycan (N-linked (GlcNAc...) asparagine) is linked at asparagine 592. Glutamate 641 contacts Ca(2+). An N-linked (GlcNAc...) asparagine glycan is attached at asparagine 659. Phenylalanine 663 contacts Ca(2+). The N-linked (GlcNAc...) asparagine glycan is linked to asparagine 666. The Ca(2+) site is built by glutamate 667, aspartate 673, and leucine 674. Residue histidine 684 participates in Cu(2+) binding. A disulfide bond links cysteine 734 and cysteine 741.

This sequence belongs to the copper/topaquinone oxidase family. As to quaternary structure, homodimer; disulfide-linked. Probably forms heterodimers with AOC2. Cu(2+) is required as a cofactor. Ca(2+) serves as cofactor. The cofactor is L-topaquinone. In terms of processing, topaquinone (TPQ) is generated by copper-dependent autoxidation of a specific tyrosyl residue. N- and O-glycosylated.

The protein localises to the cell membrane. It carries out the reaction methylamine + O2 + H2O = formaldehyde + H2O2 + NH4(+). It catalyses the reaction benzylamine + O2 + H2O = benzaldehyde + H2O2 + NH4(+). The catalysed reaction is 2-phenylethylamine + O2 + H2O = 2-phenylacetaldehyde + H2O2 + NH4(+). Functionally, catalyzes the oxidative deamination of primary amines to the corresponding aldehydes with the concomitant production of hydrogen peroxide and ammonia. Has a preference for the primary monoamines methylamine and benzylamine. Could also act on 2-phenylethylamine but much less efficiently. At endothelial cells surface can also function as a cell adhesion protein that participates in lymphocyte extravasation and recirculation by mediating the binding of lymphocytes to peripheral lymph node vascular endothelial cells in an L-selectin-independent fashion. The protein is Amine oxidase [copper-containing] 3 of Mus musculus (Mouse).